Consider the following 862-residue polypeptide: Transcription factor E2F7 (862 aa).

DNA-binding regions lie at residues 140-209 (RKQK…CWHG) and 279-364 (RKDK…KWIG). Disordered regions lie at residues 561–592 (PGSD…DAPL), 617–643 (TPEQ…NVGE), and 788–862 (KADS…SAGN). Polar residues predominate over residues 564–574 (DSPTLEETTMS). The segment covering 575-590 (KQERPTKRQLNDKDDA) has biased composition (basic and acidic residues). Composition is skewed to polar residues over residues 633-643 (EPVTKHSNVGE) and 832-851 (DVSS…SSAQ).

It belongs to the E2F/DP family. Homodimer and heterodimer: mainly forms homodimers and, to a lesser extent, heterodimers with e2f8.

The protein resides in the nucleus. Functionally, atypical E2F transcription factor that participates in various processes such as angiogenesis and polyploidization of specialized cells. Mainly acts as a transcription repressor that binds DNA independently of DP proteins and specifically recognizes the E2 recognition site 5'-TTTC[CG]CGC-3'. Directly represses transcription of classical E2F transcription factors such as e2f1. Acts as a regulator of S-phase by recognizing and binding the E2-related site 5'-TTCCCGCC-3' and mediating repression of G1/S-regulated genes. Acts as a promoter of sprouting angiogenesis, possibly by acting as a transcription activator. This Xenopus tropicalis (Western clawed frog) protein is Transcription factor E2F7 (e2f7).